A 352-amino-acid polypeptide reads, in one-letter code: Fatty acid synthase (352 aa).

Positions 1–352 constitute a Ketosynthase family 3 (KS3) domain; it reads MEDVVIAGIA…KVVLSLEHGL (352 aa). Active-site for beta-ketoacyl synthase activity residues include C161, H293, and H331.

Homodimer which monomers are arranged in a head to tail fashion.

It catalyses the reaction acetyl-CoA + n malonyl-CoA + 2n NADPH + 2n H(+) = a long-chain fatty acid + (n+1) CoA + n CO2 + 2n NADP(+).. Its function is as follows. Fatty acid synthetase catalyzes the formation of long-chain fatty acids from acetyl-CoA, malonyl-CoA and NADPH. This multifunctional protein has 7 catalytic activities as an acyl carrier protein. The polypeptide is Fatty acid synthase (FASN) (Anser anser anser (Western greylag goose)).